The sequence spans 731 residues: E3 ubiquitin-protein ligase COP1 (731 aa).

The tract at residues 1 to 40 (MSGSRQAGSGSAGTSPGSSAASSVTSASSSLSSSPSPPSV) is disordered. The short motif at 109 to 113 (GSRKR) is the Nuclear localization signal 1 element. The RING-type zinc-finger motif lies at 136–174 (CPICFDMIEEAYMTKCGHSFCYKCIHQSLEDNNRCPKCN). A Nuclear localization signal 2 motif is present at residues 195 to 206 (KQKQRFEEKRFK). Residues 233–301 (LDLANVNLML…DIKRVEEMSG (69 aa)) are a coiled coil. Residues 235-245 (LANVNLMLELL) carry the Nuclear export signal motif. The segment at 305–325 (PVSEDSTVPQFEAPSPSHSSI) is disordered. WD repeat units lie at residues 419-458 (NGSS…QDAV), 468-508 (TCNS…RSKV), 511-551 (EHEK…SVAS), 553-593 (EAKA…QPIM), 597-635 (GHRK…CLRS), 638-677 (GHIN…TLLT), and 691-729 (RKED…KVLE). Residues 643–645 (KNF) form an interaction with TRIB1 region.

This sequence belongs to the COP1 family. As to quaternary structure, homodimer. Homodimerization is mediated by the coiled coil domain. Component of the DCX DET1-COP1 ubiquitin ligase complex at least composed of RBX1, DET1, DDB1, CUL4A and COP1. Isoform 2 does not interact with CUL4A but still binds to RBX1, suggesting that the interaction may be mediated by another cullin protein. Isoform 1 and isoform 2 interact with CUL5 but not with CUL1, CUL2 not CUL3. Interacts with bZIP transcription factors JUN, JUNB and JUND but not with FOS, ATF2 nor XBP1. Interacts with p53 (TP53). Interacts with COPS6; this interaction stabilizes RFWD2 through reducing its auto-ubiquitination and decelerating its turnover rate. Interacts with SFN; this interaction leads to SFN degradation. Isoform 4 forms heterodimers with isoform 1, preventing its association with DET1. Interacts with p53/TP53 and MTA1. Interacts with TRIB1 (via C-terminus) and TRIB2. Autoubiquitinated. MTA1 destabilizes it by promoting its autoubiquitination. As to expression, ubiquitously expressed at low level. Expressed at higher level in testis, placenta, skeletal muscle and heart.

Its subcellular location is the nucleus speckle. The protein localises to the cytoplasm. The catalysed reaction is S-ubiquitinyl-[E2 ubiquitin-conjugating enzyme]-L-cysteine + [acceptor protein]-L-lysine = [E2 ubiquitin-conjugating enzyme]-L-cysteine + N(6)-ubiquitinyl-[acceptor protein]-L-lysine.. It participates in protein modification; protein ubiquitination. Its activity is regulated as follows. TRIB1 competes with substrates for RFWD2 binding. In terms of biological role, E3 ubiquitin-protein ligase that mediates ubiquitination and subsequent proteasomal degradation of target proteins. E3 ubiquitin ligases accept ubiquitin from an E2 ubiquitin-conjugating enzyme in the form of a thioester and then directly transfers the ubiquitin to targeted substrates. Involved in JUN ubiquitination and degradation. Directly involved in p53 (TP53) ubiquitination and degradation, thereby abolishing p53-dependent transcription and apoptosis. Ubiquitinates p53 independently of MDM2 or RCHY1. Probably mediates E3 ubiquitin ligase activity by functioning as the essential RING domain subunit of larger E3 complexes. In contrast, it does not constitute the catalytic RING subunit in the DCX DET1-COP1 complex that negatively regulates JUN, the ubiquitin ligase activity being mediated by RBX1. Involved in 14-3-3 protein sigma/SFN ubiquitination and proteasomal degradation, leading to AKT activation and promotion of cell survival. Ubiquitinates MTA1 leading to its proteasomal degradation. Upon binding to TRIB1, ubiquitinates CEBPA, which lacks a canonical COP1-binding motif. This chain is E3 ubiquitin-protein ligase COP1, found in Homo sapiens (Human).